A 286-amino-acid polypeptide reads, in one-letter code: MKLIIVSGLSGSGKSVALNALEDAGYYCVDNLHLGLLSAFVRQLMAPRMPLYELAAVGVDVRSGLEELDHFDDIMAEIRAQGVEAQILFLRADEDILLRRFSETRRKHPLARKGMPLVEALRLERSLLARIAVRADLTLDTTRTNVHQLTHLIRDRVEQAGGDALSLLFQSFGFKHGSPVDSDFVFDVRCLPNPYWEPRLRSLTGRDPDVGAYLDEHAVVQEMFDSLRDFLERWIPCFEAEHRSYMTVSLGCTGGQHRSVYLAERLAAHFRQTRGLNVSTRHRELS.

Residue 8-15 (GLSGSGKS) participates in ATP binding. 60–63 (DVRS) contributes to the GTP binding site.

Belongs to the RapZ-like family.

In terms of biological role, displays ATPase and GTPase activities. The chain is Nucleotide-binding protein Tgr7_0722 from Thioalkalivibrio sulfidiphilus (strain HL-EbGR7).